The sequence spans 78 residues: MTAKATLLVLALVVMATSGVSSASVAGGPVVNSDTVSRSDPERLSTRGCVANCQANQTGIDCIKYCGIGIGRRDITQQ.

Positions 1 to 22 (MTAKATLLVLALVVMATSGVSS) are cleaved as a signal peptide. Residues 23 to 47 (ASVAGGPVVNSDTVSRSDPERLSTR) constitute a propeptide that is removed on maturation. I70 carries the post-translational modification Isoleucine amide. Residues 74–78 (DITQQ) constitute a propeptide that is removed on maturation.

Post-translationally, contains 2 disulfide bonds. Expressed by the venom duct.

It localises to the secreted. This chain is Conotoxin Cl14.9, found in Californiconus californicus (California cone).